The primary structure comprises 545 residues: Adenine deaminase (545 aa).

The protein belongs to the metallo-dependent hydrolases superfamily. Adenine deaminase family. Requires Mn(2+) as cofactor.

It carries out the reaction adenine + H2O + H(+) = hypoxanthine + NH4(+). The polypeptide is Adenine deaminase (Salinibacter ruber (strain DSM 13855 / M31)).